The primary structure comprises 728 residues: Dehydrocurvularin biosynthesis regulator (728 aa).

The segment at residues 28-58 (CWECKRRKMKCRFDPRIASACNGCRRRGSPC) is a DNA-binding region (zn(2)-C6 fungal-type). Disordered regions lie at residues 75–130 (GTTS…TSQR) and 606–626 (QHATTASKPPVDRSPSSNSDA). Positions 89–109 (RATTPSERTDQILTPVSTVRE) are enriched in polar residues.

The protein localises to the nucleus. Transcription factor involved in regulation of the dehydrocurvularin biosynthesis gene cluster. In Aspergillus terreus, this protein is Dehydrocurvularin biosynthesis regulator.